The following is a 131-amino-acid chain: Small ribosomal subunit protein uS11 (131 aa).

This sequence belongs to the universal ribosomal protein uS11 family. As to quaternary structure, part of the 30S ribosomal subunit. Interacts with proteins S7 and S18. Binds to IF-3.

Its function is as follows. Located on the platform of the 30S subunit, it bridges several disparate RNA helices of the 16S rRNA. Forms part of the Shine-Dalgarno cleft in the 70S ribosome. The sequence is that of Small ribosomal subunit protein uS11 from Endomicrobium trichonymphae.